The following is a 142-amino-acid chain: Hemoglobin subunit alpha-2 (142 aa).

Residues 2 to 142 form the Globin domain; it reads VLSAADKTNV…VSTVLTSKYR (141 aa). His-59 contributes to the O2 binding site. Residue His-88 participates in heme b binding.

This sequence belongs to the globin family. As to quaternary structure, heterotetramer of two alpha chains and two beta chains. As to expression, red blood cells.

Functionally, involved in oxygen transport from the lung to the various peripheral tissues. Its function is as follows. Hemopressin acts as an antagonist peptide of the cannabinoid receptor CNR1. Hemopressin-binding efficiently blocks cannabinoid receptor CNR1 and subsequent signaling. In Equus quagga burchellii (Burchell's zebra), this protein is Hemoglobin subunit alpha-2 (HBA2).